We begin with the raw amino-acid sequence, 292 residues long: uncharacterized protein (292 aa).

A run of 4 helical transmembrane segments spans residues 17–37, 135–155, 166–186, and 216–236; these read LFYT…FPAL, LIAV…IGQL, TTLW…YDIV, and FHGV…TALY. Residues 267-292 are disordered; the sequence is EKSEDKKSIVTSRIEEENEDEISDYE. A compositionally biased stretch (acidic residues) spans 282-292; it reads EENEDEISDYE.

The protein localises to the membrane. This is an uncharacterized protein from Caenorhabditis elegans.